We begin with the raw amino-acid sequence, 391 residues long: 5-amino-6-(D-ribitylamino)uracil--L-tyrosine 4-hydroxyphenyl transferase (391 aa).

The 248-residue stretch at 55 to 302 (VTYVINRNIN…GAVARIYLGN (248 aa)) folds into the Radical SAM core domain. [4Fe-4S] cluster is bound by residues C69, C73, and C76.

This sequence belongs to the radical SAM superfamily. CofH family. As to quaternary structure, consists of two subunits, CofG and CofH. It depends on [4Fe-4S] cluster as a cofactor.

The enzyme catalyses 5-amino-6-(D-ribitylamino)uracil + L-tyrosine + S-adenosyl-L-methionine = 5-amino-5-(4-hydroxybenzyl)-6-(D-ribitylimino)-5,6-dihydrouracil + 2-iminoacetate + 5'-deoxyadenosine + L-methionine + H(+). It functions in the pathway cofactor biosynthesis; coenzyme F0 biosynthesis. Functionally, catalyzes the radical-mediated synthesis of 5-amino-5-(4-hydroxybenzyl)-6-(D-ribitylimino)-5,6-dihydrouracil from 5-amino-6-(D-ribitylamino)uracil and L-tyrosine. This chain is 5-amino-6-(D-ribitylamino)uracil--L-tyrosine 4-hydroxyphenyl transferase, found in Trichormus variabilis (strain ATCC 29413 / PCC 7937) (Anabaena variabilis).